We begin with the raw amino-acid sequence, 293 residues long: Probable metal transport system membrane protein CT_417 (293 aa).

The next 7 membrane-spanning stretches (helical) occupy residues 18–38 (SLLA…YIVV), 41–61 (IVSI…IALW), 68–88 (LPIS…ICIG), 101–121 (IISM…SKLP), 135–155 (ILWV…FIVA), 187–207 (LLLI…GVIL), and 242–262 (FLGI…IAIL).

The protein belongs to the ABC-3 integral membrane protein family.

It localises to the cell inner membrane. Part of an ATP-driven transport system CT_415/CT_416/CT_417 for a metal. This Chlamydia trachomatis serovar D (strain ATCC VR-885 / DSM 19411 / UW-3/Cx) protein is Probable metal transport system membrane protein CT_417.